A 191-amino-acid polypeptide reads, in one-letter code: Probable protein adenylyltransferase HI_0977 (191 aa).

The Fido domain maps to 37 to 162 (GSTKGLQQIH…NDLEIRFLLQ (126 aa)). Residues 67 to 68 (KG), 112 to 114 (GNG), Arg118, and Gln145 each bind ATP.

Belongs to the fic family.

It carries out the reaction L-tyrosyl-[protein] + ATP = O-(5'-adenylyl)-L-tyrosyl-[protein] + diphosphate. It catalyses the reaction L-threonyl-[protein] + ATP = 3-O-(5'-adenylyl)-L-threonyl-[protein] + diphosphate. In terms of biological role, probable adenylyltransferase that mediates the addition of adenosine 5'-monophosphate (AMP) to specific residues of target proteins. The sequence is that of Probable protein adenylyltransferase HI_0977 from Haemophilus influenzae (strain ATCC 51907 / DSM 11121 / KW20 / Rd).